Here is a 305-residue protein sequence, read N- to C-terminus: Beta-lactamase (305 aa).

A signal peptide (tat-type signal) is located at residues 1-34 (MGTTGARPSRRAVLTAAAGAAVAGIPLGGSTAFA). The active-site Acyl-ester intermediate is Ser82. Residue 250–252 (KTG) coordinates substrate.

The protein belongs to the class-A beta-lactamase family. In terms of processing, predicted to be exported by the Tat system. The position of the signal peptide cleavage has not been experimentally proven.

It catalyses the reaction a beta-lactam + H2O = a substituted beta-amino acid. The protein is Beta-lactamase of Streptomyces lavendulae.